A 138-amino-acid polypeptide reads, in one-letter code: Basic phospholipase A2 Sct-N6 (138 aa).

An N-terminal signal peptide occupies residues M1–G16. Cystine bridges form between C42-C131, C44-C60, C59-C111, C65-C138, C66-C104, C73-C97, and C91-C102. Ca(2+) contacts are provided by Y43, G45, and G47. H63 is a catalytic residue. Residue D64 participates in Ca(2+) binding. Residue D105 is part of the active site.

This sequence belongs to the phospholipase A2 family. Group II subfamily. D49 sub-subfamily. Requires Ca(2+) as cofactor. As to expression, expressed by the venom gland.

It is found in the secreted. It catalyses the reaction a 1,2-diacyl-sn-glycero-3-phosphocholine + H2O = a 1-acyl-sn-glycero-3-phosphocholine + a fatty acid + H(+). In terms of biological role, snake venom phospholipase A2 (PLA2) that displays edema-inducing activities, as well as presynaptic neurotoxicity and low myotoxicity. PLA2 catalyzes the calcium-dependent hydrolysis of the 2-acyl groups in 3-sn-phosphoglycerides. The protein is Basic phospholipase A2 Sct-N6 of Sistrurus tergeminus (Western massasauga).